We begin with the raw amino-acid sequence, 967 residues long: RNA polymerase-associated protein RapA (967 aa).

A Helicase ATP-binding domain is found at 163 to 333 (EVGQRHAPRV…FARLRLLDPN (171 aa)). Residue 176-183 (DEVGLGKT) participates in ATP binding. The DEAH box motif lies at 279-282 (DEAH). A Helicase C-terminal domain is found at 489–643 (RVEWLLNYLT…TCPTGRTIYD (155 aa)).

It belongs to the SNF2/RAD54 helicase family. RapA subfamily. In terms of assembly, interacts with the RNAP. Has a higher affinity for the core RNAP than for the holoenzyme. Its ATPase activity is stimulated by binding to RNAP.

In terms of biological role, transcription regulator that activates transcription by stimulating RNA polymerase (RNAP) recycling in case of stress conditions such as supercoiled DNA or high salt concentrations. Probably acts by releasing the RNAP, when it is trapped or immobilized on tightly supercoiled DNA. Does not activate transcription on linear DNA. Probably not involved in DNA repair. In Pectobacterium carotovorum subsp. carotovorum (strain PC1), this protein is RNA polymerase-associated protein RapA.